The chain runs to 46 residues: uncharacterized protein (46 aa).

This is an uncharacterized protein from Acidianus sp. F28 (AFV-2).